The chain runs to 202 residues: MAIILPDLPYAYDALEPHIDAETMTLHHDKHHATYVANANAALEKHPEIGEDLEALLADVSQIPEDIRQAVINNGGGHLNHALFWELMSPEETQISQELSEDINATFGSFEDFKAAFTAAATGRFGSGWAWLVVNAEGKLEVLSTANQDTPIMEGKKPILGLDVWEHAYYLNYRNVRPNYIKAFFEIINWNKVNELYQAAKA.

His-27, His-81, Asp-163, and His-167 together coordinate Fe(3+). Mn(2+)-binding residues include His-27, His-81, Asp-163, and His-167.

It belongs to the iron/manganese superoxide dismutase family. Mn(2+) is required as a cofactor. The cofactor is Fe(3+).

It carries out the reaction 2 superoxide + 2 H(+) = H2O2 + O2. Destroys superoxide anion radicals which are normally produced within the cells and which are toxic to biological systems. Catalyzes the dismutation of superoxide anion radicals into O2 and H2O2 by successive reduction and oxidation of the transition metal ion at the active site. This is Superoxide dismutase [Mn/Fe] (sodA) from Streptococcus agalactiae serotype V (strain ATCC BAA-611 / 2603 V/R).